The sequence spans 102 residues: Small ribosomal subunit protein uS10 (102 aa).

The protein belongs to the universal ribosomal protein uS10 family. In terms of assembly, part of the 30S ribosomal subunit.

Involved in the binding of tRNA to the ribosomes. The chain is Small ribosomal subunit protein uS10 from Mesorhizobium japonicum (strain LMG 29417 / CECT 9101 / MAFF 303099) (Mesorhizobium loti (strain MAFF 303099)).